Consider the following 150-residue polypeptide: Classical arabinogalactan protein 6 (150 aa).

Residues 1–20 form the signal peptide; sequence MARQFVVLVLLTLTIATAFA. Low complexity-rich tracts occupy residues 19–75 and 85–98; these read FAAD…SPAA and SASS…APTV. Residues 19–131 form a disordered region; the sequence is FAADAPSASP…ESPKSGAVTT (113 aa). S126 is lipidated: GPI-anchor amidated serine. The propeptide at 127–150 is removed in mature form; the sequence is GAVTTAKFSVVGTVATVGFFFFSF.

This sequence belongs to the classical AGP family. Post-translationally, O-glycosylated on the hydroxyproline residues. As to expression, expressed in the anthers.

The protein resides in the cell membrane. Its function is as follows. Proteoglycan that seems to be implicated in diverse developmental roles such as differentiation, cell-cell recognition, embryogenesis and programmed cell death. Plays an important role during the formation of the nexine layer of the pollen wall. This chain is Classical arabinogalactan protein 6 (AGP6), found in Arabidopsis thaliana (Mouse-ear cress).